A 66-amino-acid polypeptide reads, in one-letter code: Beta-toxin Ct71 (66 aa).

The LCN-type CS-alpha/beta domain occupies 1 to 66 (KEGYIVNYHD…VWPLPKKTCN (66 aa)). 4 disulfide bridges follow: Cys-12–Cys-65, Cys-16–Cys-41, Cys-25–Cys-46, and Cys-29–Cys-48. An Asparagine amide modification is found at Asn-66.

It belongs to the long (4 C-C) scorpion toxin superfamily. Sodium channel inhibitor family. Beta subfamily. As to expression, expressed by the venom gland.

It localises to the secreted. In terms of biological role, beta toxins bind voltage-independently at site-4 of sodium channels (Nav) and shift the voltage of activation toward more negative potentials thereby affecting sodium channel activation and promoting spontaneous and repetitive firing. Lethal to mice. The protein is Beta-toxin Ct71 of Centruroides tecomanus (Scorpion).